The chain runs to 864 residues: N-alpha-acetyltransferase 16, NatA auxiliary subunit (864 aa).

7 TPR repeats span residues 46-79 (GETL…DVKS), 80-113 (HVCW…DKDN), 148-184 (RASW…PPNK), 224-257 (LLVE…NAEN), 374-407 (LWVQ…TPTL), 409-441 (ELFY…DTAD), and 485-518 (MWFQ…FFEI). The tract at residues 603 to 638 (QKKAKLEEERKHAERERQQKNQKKKRDEEEEEASGL) is disordered. Over residues 606 to 621 (AKLEEERKHAERERQQ) the composition is skewed to basic and acidic residues.

Component of the N-terminal acetyltransferase A (NatA) complex composed of NAA10 and NAA16.

Functionally, auxillary subunit of the N-terminal acetyltransferase A (NatA) complex which displays alpha (N-terminal) acetyltransferase activity. This Homo sapiens (Human) protein is N-alpha-acetyltransferase 16, NatA auxiliary subunit (NAA16).